Reading from the N-terminus, the 956-residue chain is Isoleucine--tRNA ligase (956 aa).

Residues 60–70 carry the 'HIGH' region motif; the sequence is PYANGHIHVGH. Glu-583 serves as a coordination point for L-isoleucyl-5'-AMP. The 'KMSKS' region motif lies at 624 to 628; the sequence is KMSKS. Lys-627 lines the ATP pocket. The Zn(2+) site is built by Cys-921, Cys-924, Cys-938, and Cys-941.

This sequence belongs to the class-I aminoacyl-tRNA synthetase family. IleS type 1 subfamily. Monomer. Zn(2+) serves as cofactor.

It localises to the cytoplasm. The enzyme catalyses tRNA(Ile) + L-isoleucine + ATP = L-isoleucyl-tRNA(Ile) + AMP + diphosphate. Its function is as follows. Catalyzes the attachment of isoleucine to tRNA(Ile). As IleRS can inadvertently accommodate and process structurally similar amino acids such as valine, to avoid such errors it has two additional distinct tRNA(Ile)-dependent editing activities. One activity is designated as 'pretransfer' editing and involves the hydrolysis of activated Val-AMP. The other activity is designated 'posttransfer' editing and involves deacylation of mischarged Val-tRNA(Ile). The sequence is that of Isoleucine--tRNA ligase from Aquifex aeolicus (strain VF5).